We begin with the raw amino-acid sequence, 519 residues long: Halolysin (519 aa).

A signal peptide (tat-type signal) is located at residues 1 to 27 (MAGTPNFDRRSFLRLAAAAGLTGMAGV). The propeptide occupies 28-116 (TSATPGRSPG…AEKNATHEAL (89 aa)). The region spanning 127–400 (QYAPQQVNAD…SGRVDAANAV (274 aa)) is the Peptidase S8 domain. Catalysis depends on charge relay system residues Asp154, His193, and Ser347. The interval 386–425 (STKQGSGRVDAANAVTTDPGDGGGGGGGGSKETTYDGTLS) is disordered. The segment covering 405-415 (GDGGGGGGGGS) has biased composition (gly residues).

The protein belongs to the peptidase S8 family. Predicted to be exported by the Tat system. The position of the signal peptide cleavage has not been experimentally proven.

It is found in the secreted. Its function is as follows. Probable secreted halophilic serine protease showing proteolytic activity toward the protease general substrate azocasein. The polypeptide is Halolysin (hly) (Haloferax mediterranei (strain ATCC 33500 / DSM 1411 / JCM 8866 / NBRC 14739 / NCIMB 2177 / R-4) (Halobacterium mediterranei)).